Reading from the N-terminus, the 146-residue chain is Ribonuclease H (146 aa).

Residues 1–143 (MKKQVTIYTD…CDQLAREAIK (143 aa)) form the RNase H type-1 domain. Aspartate 10, glutamate 48, aspartate 70, and aspartate 135 together coordinate Mg(2+).

This sequence belongs to the RNase H family. As to quaternary structure, monomer. It depends on Mg(2+) as a cofactor.

The protein resides in the cytoplasm. The catalysed reaction is Endonucleolytic cleavage to 5'-phosphomonoester.. Its function is as follows. Endonuclease that specifically degrades the RNA of RNA-DNA hybrids. This is Ribonuclease H from Chlorobium chlorochromatii (strain CaD3).